Reading from the N-terminus, the 948-residue chain is Translation initiation factor IF-2 (948 aa).

Disordered stretches follow at residues 61–120 (IQAN…PALI), 162–243 (KSRE…TQSA), and 255–285 (QEKD…SHKI). A compositionally biased stretch (basic and acidic residues) spans 68–78 (KNPEQDNKDDL). Over residues 173-189 (SNTNNANSTNNANNVNN) the composition is skewed to low complexity. A compositionally biased stretch (basic and acidic residues) spans 190–207 (AKKEISEVKKQEQEIKRH). Over residues 208–219 (ENIKRRTGFRVI) the composition is skewed to basic residues. A compositionally biased stretch (polar residues) spans 230 to 243 (ENSVAESKKPTQSA). Residues 447 to 616 (ERPPVVTIMG…LIQADIMELK (170 aa)) enclose the tr-type G domain. Residues 456–463 (GHVDHGKT) are G1. Position 456–463 (456–463 (GHVDHGKT)) interacts with GTP. The interval 481–485 (GITQH) is G2. The tract at residues 502 to 505 (DTPG) is G3. GTP contacts are provided by residues 502 to 506 (DTPGH) and 556 to 559 (NKMD). Residues 556–559 (NKMD) are G4. A G5 region spans residues 592-594 (SAK).

The protein belongs to the TRAFAC class translation factor GTPase superfamily. Classic translation factor GTPase family. IF-2 subfamily.

It localises to the cytoplasm. Its function is as follows. One of the essential components for the initiation of protein synthesis. Protects formylmethionyl-tRNA from spontaneous hydrolysis and promotes its binding to the 30S ribosomal subunits. Also involved in the hydrolysis of GTP during the formation of the 70S ribosomal complex. This Helicobacter pylori (strain Shi470) protein is Translation initiation factor IF-2.